We begin with the raw amino-acid sequence, 549 residues long: MSRRQTCSLLLIAFGLFYLVPLSNHGLWIPDETRYAQISQAMLLGGDWVSPHFLGLRYFEKPVAGYWMIALGQAVFGENLFGVRIASVVATALSVLLAYLLARRLWRDPRTSLACALLYASFGLIAGQSGYANLDPQFTFWVNLSLVALWHALDAGSRRARLLGWTLLGLACGMGFLTKGFLAWLLPVLVALPYMLWQRRWRELLGYGALAVLAALLVCLPWALAVHAREADYWRFFFWHEHIRRFAGEDAQHSRPWWFYLPLLAVACLPWSGLLPSALRQAWHERRQAPVVFLALWLLLPLAFFSLSRGKLPTYIMPCLLPLALLMGHALVQRLRLGNSVALRGNGLLNLGLALLALAALAYLQLRKPVYQEEPFELFLVLLVIGAWAAAGLAQWRYPLRAWAAPLLASWVLIALLPAAMPNHVVQNKTPDLFVAEHLDELTGARHLLSNDLGAASALAWRLRRSDVTLYDTRGELKYGLSYPEHSQRSVPLADIRQWLWRARQDGSIAVLLRINSASDRYQLALLPGDGERYRNGNLVLAILPQVRP.

Helical transmembrane passes span 9-29, 80-100, 112-132, 136-156, 176-196, 204-224, 256-276, 288-308, 312-332, 346-366, 376-396, and 402-422; these read LLLI…GLWI, LFGV…LAYL, SLAC…SGYA, PQFT…LDAG, FLTK…PYML, LLGY…PWAL, PWWF…GLLP, QAPV…FSLS, LPTY…HALV, NGLL…YLQL, FELF…LAQW, and AWAA…AAMP.

This sequence belongs to the glycosyltransferase 83 family.

The protein localises to the cell inner membrane. The enzyme catalyses 4-amino-4-deoxy-alpha-L-arabinopyranosyl di-trans,octa-cis-undecaprenyl phosphate + lipid IVA = lipid IIA + di-trans,octa-cis-undecaprenyl phosphate.. It functions in the pathway lipopolysaccharide metabolism; 4-amino-4-deoxy-beta-L-arabinose-lipid A biosynthesis. In terms of biological role, catalyzes the transfer of the L-Ara4N moiety of the glycolipid undecaprenyl phosphate-alpha-L-Ara4N to lipid A. The modified arabinose is attached to lipid A and is required for resistance to polymyxin and cationic antimicrobial peptides. The protein is Undecaprenyl phosphate-alpha-4-amino-4-deoxy-L-arabinose arabinosyl transferase of Pseudomonas aeruginosa (strain ATCC 15692 / DSM 22644 / CIP 104116 / JCM 14847 / LMG 12228 / 1C / PRS 101 / PAO1).